We begin with the raw amino-acid sequence, 241 residues long: Dephospho-CoA kinase CAB5 (241 aa).

A DPCK domain is found at 3–211 (VVGLTGGIAC…PSKLRTVLEY (209 aa)). 8 to 15 (GGIACGKS) serves as a coordination point for ATP.

Belongs to the CoaE family.

The protein localises to the endoplasmic reticulum. The protein resides in the mitochondrion. Its subcellular location is the nucleus. It carries out the reaction 3'-dephospho-CoA + ATP = ADP + CoA + H(+). It functions in the pathway cofactor biosynthesis; coenzyme A biosynthesis; CoA from (R)-pantothenate: step 5/5. Functionally, catalyzes the phosphorylation of the 3'-hydroxyl group of dephosphocoenzyme A to form coenzyme A. In Saccharomyces cerevisiae (strain ATCC 204508 / S288c) (Baker's yeast), this protein is Dephospho-CoA kinase CAB5 (CAB5).